A 307-amino-acid polypeptide reads, in one-letter code: Protoheme IX farnesyltransferase (307 aa).

Helical transmembrane passes span 32 to 52 (MGIVNSNTLTVFTGFWLALHF), 65 to 85 (FFTIVGSGLVMAGVCCLNNYI), 108 to 128 (PGFALTFGLVILLLGFVFLLL), 131 to 151 (PMAVLMGFIGAFTYVVLYSLW), 158 to 178 (LNTVVGSISGAVPPLIGWAAI), 186 to 206 (IAWMLFLIMFIWQIPHFLALA), 251 to 271 (LGITFMVIATLLNIGWIVLGF), and 287 to 307 (FVYSLNYLTILFVSMIVVTFF).

Belongs to the UbiA prenyltransferase family. Protoheme IX farnesyltransferase subfamily. As to quaternary structure, interacts with CtaA.

The protein localises to the cell membrane. It carries out the reaction heme b + (2E,6E)-farnesyl diphosphate + H2O = Fe(II)-heme o + diphosphate. It functions in the pathway porphyrin-containing compound metabolism; heme O biosynthesis; heme O from protoheme: step 1/1. Functionally, converts heme B (protoheme IX) to heme O by substitution of the vinyl group on carbon 2 of heme B porphyrin ring with a hydroxyethyl farnesyl side group. This is Protoheme IX farnesyltransferase from Bacillus cereus (strain G9842).